The primary structure comprises 101 residues: Antiviral protein CAP (101 aa).

Its function is as follows. Has antiviral activity against tobacco mosaic virus and antitumor activity. This Coprinus comatus (Shaggy mane) protein is Antiviral protein CAP.